Reading from the N-terminus, the 319-residue chain is Acetyl-coenzyme A carboxylase carboxyl transferase subunit alpha (319 aa).

Residues 35–296 (NIDEEVHRLR…KAQLLEDLAD (262 aa)) form the CoA carboxyltransferase C-terminal domain.

The protein belongs to the AccA family. As to quaternary structure, acetyl-CoA carboxylase is a heterohexamer composed of biotin carboxyl carrier protein (AccB), biotin carboxylase (AccC) and two subunits each of ACCase subunit alpha (AccA) and ACCase subunit beta (AccD).

It is found in the cytoplasm. The enzyme catalyses N(6)-carboxybiotinyl-L-lysyl-[protein] + acetyl-CoA = N(6)-biotinyl-L-lysyl-[protein] + malonyl-CoA. It participates in lipid metabolism; malonyl-CoA biosynthesis; malonyl-CoA from acetyl-CoA: step 1/1. In terms of biological role, component of the acetyl coenzyme A carboxylase (ACC) complex. First, biotin carboxylase catalyzes the carboxylation of biotin on its carrier protein (BCCP) and then the CO(2) group is transferred by the carboxyltransferase to acetyl-CoA to form malonyl-CoA. In Salmonella arizonae (strain ATCC BAA-731 / CDC346-86 / RSK2980), this protein is Acetyl-coenzyme A carboxylase carboxyl transferase subunit alpha.